A 57-amino-acid polypeptide reads, in one-letter code: Large ribosomal subunit protein bL32 (57 aa).

Belongs to the bacterial ribosomal protein bL32 family.

This Bacillus anthracis (strain A0248) protein is Large ribosomal subunit protein bL32.